A 476-amino-acid polypeptide reads, in one-letter code: MVQNHQTVLAVDMPQTGGSKYLDDDGKNKRTGSVWTASAHIITAVIGSGVLSLAWATAQLGWLAGPVVMLLFSAVTYFTSSLLAACYRSGDPISGKRNYTYMDAVRSNLGGVKVTLCGIVQYLNIFGVAIGYTIASAISMMAIKRSNCFHKSGGKDPCHMNSNPYMIAFGLVQILFSQIPDFDQLWWLSILAAVMSFTYSSAGLALGIAQVVVNGKVKGSLTGISIGAVTETQKIWRTFQALGDIAFAYSYSIILIEIQDTVKSPPSEEKTMKKATLVSVSVTTMFYMLCGCMGYAAFGDLSPGNLLTGFGFYNPYWLLDIANAAIVIHLIGAYQVYCQPLFAFIEKQASIQFPDSEFIAKDIKIPIPGFKPLRLNVFRLIWRTVFVIITTVISMLLPFFNDVVGLLGALGFWPLTVYFPVEMYIAQKKIPRWSTRWVCLQVFSLGCLVVSIAAAAGSIAGVLLDLKSYKPFRSEY.

At 1–33 (MVQNHQTVLAVDMPQTGGSKYLDDDGKNKRTGS) the chain is on the cytoplasmic side. Residues 34-54 (VWTASAHIITAVIGSGVLSLA) traverse the membrane as a helical segment. Residues 55-57 (WAT) lie on the Extracellular side of the membrane. A helical transmembrane segment spans residues 58–78 (AQLGWLAGPVVMLLFSAVTYF). The Cytoplasmic portion of the chain corresponds to 79 to 122 (TSSLLAACYRSGDPISGKRNYTYMDAVRSNLGGVKVTLCGIVQY). The helical transmembrane segment at 123-143 (LNIFGVAIGYTIASAISMMAI) threads the bilayer. Residues 144–166 (KRSNCFHKSGGKDPCHMNSNPYM) lie on the Extracellular side of the membrane. 2 helical membrane passes run 167–187 (IAFG…QLWW) and 188–208 (LSIL…ALGI). Residues 209–277 (AQVVVNGKVK…EEKTMKKATL (69 aa)) are Extracellular-facing. Residues 278–298 (VSVSVTTMFYMLCGCMGYAAF) traverse the membrane as a helical segment. Topologically, residues 299 to 300 (GD) are cytoplasmic. Residues 301 to 321 (LSPGNLLTGFGFYNPYWLLDI) traverse the membrane as a helical segment. Topologically, residues 322 to 324 (ANA) are extracellular. Residues 325-345 (AIVIHLIGAYQVYCQPLFAFI) form a helical membrane-spanning segment. Over 346-384 (EKQASIQFPDSEFIAKDIKIPIPGFKPLRLNVFRLIWRT) the chain is Cytoplasmic. The next 2 helical transmembrane spans lie at 385 to 405 (VFVI…DVVG) and 406 to 426 (LLGA…MYIA). The Cytoplasmic portion of the chain corresponds to 427–441 (QKKIPRWSTRWVCLQ). The chain crosses the membrane as a helical span at residues 442-462 (VFSLGCLVVSIAAAAGSIAGV). Over 463–476 (LLDLKSYKPFRSEY) the chain is Extracellular.

This sequence belongs to the amino acid/polyamine transporter 2 family. Amino acid/auxin permease (AAAP) (TC 2.A.18.2) subfamily. In terms of tissue distribution, expressed in the root phloem. Detected in stamens, in cotyledons, and in major veins of mature leaves.

Its subcellular location is the cell membrane. The protein localises to the nucleus membrane. It is found in the endomembrane system. Inhibited by carbonylcyanide m-chlorophenylhydrazone and 2,4-dinitrophenol. Functionally, amino acid-proton symporter. Stereospecific transporter with a broad specificity for GABA, tryptophan and both neutral and basic amino acids. High affinity transport of cationic amino acids. This chain is Amino acid permease 3 (AAP3), found in Arabidopsis thaliana (Mouse-ear cress).